We begin with the raw amino-acid sequence, 293 residues long: Probable metal transport system membrane protein CT_417 (293 aa).

Helical transmembrane passes span 18-38, 41-61, 68-88, 101-121, 135-155, 187-207, and 242-262; these read SLLA…YIVV, IVSI…IALW, LPIS…ICIG, IISM…SKLP, ILWV…FIVA, LLLI…GVIL, and FLGI…IAIL.

This sequence belongs to the ABC-3 integral membrane protein family.

It is found in the cell inner membrane. In terms of biological role, part of an ATP-driven transport system CT_415/CT_416/CT_417 for a metal. This chain is Probable metal transport system membrane protein CT_417, found in Chlamydia trachomatis serovar D (strain ATCC VR-885 / DSM 19411 / UW-3/Cx).